We begin with the raw amino-acid sequence, 578 residues long: Putative multidrug export ATP-binding/permease protein SAB1799c (578 aa).

At M1–R15 the chain is on the cytoplasmic side. A helical membrane pass occupies residues I16 to L36. The region spanning I16–Q306 is the ABC transmembrane type-1 domain. Residues I37–L59 are Extracellular-facing. A helical membrane pass occupies residues T60–I80. At R81–G138 the chain is on the cytoplasmic side. The chain crosses the membrane as a helical span at residues L139–L159. At D160–K162 the chain is on the extracellular side. Residues L163–G183 form a helical membrane-spanning segment. Over R184–R242 the chain is Cytoplasmic. The chain crosses the membrane as a helical span at residues W243–V262. Residues I263 to A267 lie on the Extracellular side of the membrane. The chain crosses the membrane as a helical span at residues Y268–L287. At E288–L578 the chain is on the cytoplasmic side. The ABC transporter domain maps to I340–I575. An ATP-binding site is contributed by G374 to S381.

Belongs to the ABC transporter superfamily. Homodimer.

It localises to the cell membrane. In terms of biological role, may be involved in multidrug export. Transmembrane domains (TMD) form a pore in the cell membrane and the ATP-binding domain (NBD) is responsible for energy generation. This Staphylococcus aureus (strain bovine RF122 / ET3-1) protein is Putative multidrug export ATP-binding/permease protein SAB1799c.